A 102-amino-acid chain; its full sequence is Gonadotropin subunit beta-1 (102 aa).

5 disulfides stabilise this stretch: Cys-8–Cys-51, Cys-20–Cys-65, Cys-31–Cys-77, Cys-35–Cys-79, and Cys-82–Cys-89. Residue Asn-12 is glycosylated (N-linked (GlcNAc...) asparagine).

The protein belongs to the glycoprotein hormones subunit beta family. In terms of assembly, heterodimer of an alpha and a beta chain.

It localises to the secreted. Functionally, involved in gametogenesis and steroidogenesis. In Thunnus obesus (Bigeye tuna), this protein is Gonadotropin subunit beta-1 (cgba).